The sequence spans 36 residues: Light-harvesting protein B-1015 gamma chain (36 aa).

In terms of biological role, one of the components of the bacteriochlorophyll-protein complex in the chromatophore membrane. The chain is Light-harvesting protein B-1015 gamma chain from Blastochloris viridis (Rhodopseudomonas viridis).